Reading from the N-terminus, the 475-residue chain is Putative aldehyde dehydrogenase (475 aa).

Residues 146–147 (WN) and 223–224 (GS) each bind NAD(+). Residue E245 is the Proton acceptor of the active site. L246 contributes to the NAD(+) binding site. C279 (nucleophile) is an active-site residue. Position 379 (E379) interacts with NAD(+).

Belongs to the aldehyde dehydrogenase family.

It carries out the reaction an aldehyde + NAD(+) + H2O = a carboxylate + NADH + 2 H(+). This Staphylococcus aureus (strain USA300) protein is Putative aldehyde dehydrogenase.